Reading from the N-terminus, the 368-residue chain is MTIKIQFKQTLGETNFDIDLSLPRNEISALFGRSGAGKTTLINVISGLVTPQQGRIAIGDHVLFDSEQGINLPTHKRKIGYVFQDSRLFPHYSVQGNLLYGVKEKDDAYFDAVTDLLSIKPLLKRFPISLSGGEKQRVAIARALLSKPDLLLMDEPLASLDMPRKREVMPFLEELSDKVNIPIIYVTHSLQEILRLAQHLAIIDKGQVTTSGKLEEVWASHAMRPWQSFSDQSSLFEGKIEAHHSQYALTRVKLAPNASLWVQKIDGEPDTPIRLQVRANDVSIALEQPKATSIRNVLPAEVHSIEAFNAGDDKQSINVSLQLDDGCYLWATITPWALDDLNLKVGDKVYAQVKGVSVTQRDVALAPH.

The ABC transporter domain occupies 1-230 (MTIKIQFKQT…HAMRPWQSFS (230 aa)). Residue 32–39 (GRSGAGKT) coordinates ATP. The Mop domain maps to 291 to 362 (ATSIRNVLPA…VKGVSVTQRD (72 aa)).

This sequence belongs to the ABC transporter superfamily. Molybdate importer (TC 3.A.1.8) family. The complex is composed of two ATP-binding proteins (ModC), two transmembrane proteins (ModB) and a solute-binding protein (ModA).

It localises to the cell inner membrane. The catalysed reaction is molybdate(out) + ATP + H2O = molybdate(in) + ADP + phosphate + H(+). Part of the ABC transporter complex ModABC involved in molybdenum import. Responsible for energy coupling to the transport system. The chain is Molybdenum import ATP-binding protein ModC from Vibrio parahaemolyticus serotype O3:K6 (strain RIMD 2210633).